A 252-amino-acid polypeptide reads, in one-letter code: Triosephosphate isomerase (252 aa).

10–12 lines the substrate pocket; the sequence is NWK. The active-site Electrophile is His-96. The active-site Proton acceptor is Glu-168. Substrate contacts are provided by residues Gly-174, Ser-214, and 235–236; that span reads GG.

Belongs to the triosephosphate isomerase family. As to quaternary structure, homodimer.

Its subcellular location is the cytoplasm. The catalysed reaction is D-glyceraldehyde 3-phosphate = dihydroxyacetone phosphate. It functions in the pathway carbohydrate biosynthesis; gluconeogenesis. It participates in carbohydrate degradation; glycolysis; D-glyceraldehyde 3-phosphate from glycerone phosphate: step 1/1. Involved in the gluconeogenesis. Catalyzes stereospecifically the conversion of dihydroxyacetone phosphate (DHAP) to D-glyceraldehyde-3-phosphate (G3P). This is Triosephosphate isomerase from Streptococcus pneumoniae serotype 2 (strain D39 / NCTC 7466).